The primary structure comprises 305 residues: Autophagy-related protein 27 (305 aa).

Residues 1 to 22 (MARYKGLSILSLFAVFSSLASA) form the signal peptide. The Lumenal segment spans residues 23-242 (ELDCSNIKVD…EDGGSAPSGH (220 aa)). Residues 24-231 (LDCSNIKVDG…EWKTKYACEN (208 aa)) enclose the MRH domain. Cystine bridges form between C26/C66 and C74/C81. A glycan (N-linked (GlcNAc...) asparagine) is linked at N58. N85 carries an N-linked (GlcNAc...) asparagine glycan. A disulfide bridge links C156 with C229. The tract at residues 163 to 202 (LEGLESPKPDGDKKKDGEKKDDDKKDNKDKEGKSKRDGEE) is disordered. The helical transmembrane segment at 243-263 (WGFFTWVIVLYVVLVSLPLLS) threads the bilayer. Over 264–305 (ERVTNVRCHSQPVPVHFGLSDIRLVAQLQPVWSSRVGLASSQ) the chain is Cytoplasmic.

Belongs to the ATG27 family.

It localises to the cytoplasmic vesicle membrane. It is found in the golgi apparatus membrane. The protein localises to the mitochondrion membrane. The protein resides in the preautophagosomal structure membrane. Effector of phosphatidylinositol 3-phosphate kinase signaling. Regulates the cytoplasm to vacuole transport (Cvt) vesicle formation. Plays a role in ATG protein retrieval from the pre-autophagosomal structure (PAS). This is Autophagy-related protein 27 from Arthroderma benhamiae (strain ATCC MYA-4681 / CBS 112371) (Trichophyton mentagrophytes).